Reading from the N-terminus, the 264-residue chain is Phosphonoacetaldehyde hydrolase (264 aa).

Residue Asp-9 is the Nucleophile of the active site. The Mg(2+) site is built by Asp-9 and Ala-11. The Schiff-base intermediate with substrate role is filled by Lys-50. Residue Asp-183 participates in Mg(2+) binding.

The protein belongs to the HAD-like hydrolase superfamily. PhnX family. Homodimer. Requires Mg(2+) as cofactor.

The catalysed reaction is phosphonoacetaldehyde + H2O = acetaldehyde + phosphate + H(+). In terms of biological role, involved in phosphonate degradation. The sequence is that of Phosphonoacetaldehyde hydrolase from Bacillus cereus (strain AH187).